The chain runs to 375 residues: RING-H2 finger protein ATL16 (375 aa).

The tract at residues 1-20 (MDLSNRRNPLRDLSFPPPPP) is disordered. The helical transmembrane segment at 39 to 59 (VAVIGILATAFLLVSYYVFVI) threads the bilayer. Residues 138 to 180 (CSVCLSEFQDEEKLRIIPNCSHLFHIDCIDVWLQNNANCPLCR) form an RING-type; atypical zinc finger. Disordered stretches follow at residues 223-266 (GSDR…DRGG) and 356-375 (SFGS…YFEP). Residues 238–257 (QERSNSGYLLNENTQNSISP) are compositionally biased toward polar residues.

It belongs to the RING-type zinc finger family. ATL subfamily.

The protein resides in the membrane. It catalyses the reaction S-ubiquitinyl-[E2 ubiquitin-conjugating enzyme]-L-cysteine + [acceptor protein]-L-lysine = [E2 ubiquitin-conjugating enzyme]-L-cysteine + N(6)-ubiquitinyl-[acceptor protein]-L-lysine.. The protein operates within protein modification; protein ubiquitination. The sequence is that of RING-H2 finger protein ATL16 (ATL16) from Arabidopsis thaliana (Mouse-ear cress).